The primary structure comprises 411 residues: 2,3-bisphosphoglycerate-independent phosphoglycerate mutase (411 aa).

This sequence belongs to the BPG-independent phosphoglycerate mutase family. A-PGAM subfamily. Homotetramer. Mg(2+) serves as cofactor.

It carries out the reaction (2R)-2-phosphoglycerate = (2R)-3-phosphoglycerate. It functions in the pathway carbohydrate degradation; glycolysis; pyruvate from D-glyceraldehyde 3-phosphate: step 3/5. Its activity is regulated as follows. Inhibited to approximately 20% by EDTA. In terms of biological role, catalyzes the interconversion of 2-phosphoglycerate and 3-phosphoglycerate. The protein is 2,3-bisphosphoglycerate-independent phosphoglycerate mutase (apgM) of Pyrococcus furiosus (strain ATCC 43587 / DSM 3638 / JCM 8422 / Vc1).